Reading from the N-terminus, the 84-residue chain is Turripeptide IX-03 (84 aa).

The N-terminal stretch at 1–21 (MGFYMLLTVALLLTSLMNVEA) is a signal peptide. The propeptide occupies 22–39 (TPVDQAERSALEKSGLGN). 3 disulfide bridges follow: cysteine 48/cysteine 70, cysteine 55/cysteine 74, and cysteine 60/cysteine 81.

Expressed by the venom duct.

The protein resides in the secreted. The sequence is that of Turripeptide IX-03 from Gemmula speciosa (Splendid gem-turris).